The primary structure comprises 231 residues: Ribosomal RNA small subunit methyltransferase G (231 aa).

S-adenosyl-L-methionine contacts are provided by residues G75, F80, 126-127 (AE), and R142.

The protein belongs to the methyltransferase superfamily. RNA methyltransferase RsmG family.

It localises to the cytoplasm. In terms of biological role, specifically methylates the N7 position of a guanine in 16S rRNA. The protein is Ribosomal RNA small subunit methyltransferase G of Mycoplasma capricolum subsp. capricolum (strain California kid / ATCC 27343 / NCTC 10154).